Consider the following 493-residue polypeptide: Ribose import ATP-binding protein RbsA (493 aa).

ABC transporter domains follow at residues 5 to 241 (LKIS…VGRR) and 252 to 491 (EKGE…AAAI). ATP is bound at residue 37–44 (GENGAGKS).

This sequence belongs to the ABC transporter superfamily. Ribose importer (TC 3.A.1.2.1) family. In terms of assembly, the complex is composed of an ATP-binding protein (RbsA), two transmembrane proteins (RbsC) and a solute-binding protein (RbsB).

The protein resides in the cell inner membrane. The catalysed reaction is D-ribose(out) + ATP + H2O = D-ribose(in) + ADP + phosphate + H(+). In terms of biological role, part of the ABC transporter complex RbsABC involved in ribose import. Responsible for energy coupling to the transport system. The polypeptide is Ribose import ATP-binding protein RbsA (Haemophilus influenzae (strain ATCC 51907 / DSM 11121 / KW20 / Rd)).